A 5478-amino-acid polypeptide reads, in one-letter code: Mucin-12 (5478 aa).

The first 16 residues, 1 to 16, serve as a signal peptide directing secretion; it reads MLVIWILTLALRLCAS. Over 17–5380 the chain is Extracellular; the sequence is VTTVTPEGSA…EFNIAKSLVY (5364 aa). 3 N-linked (GlcNAc...) asparagine glycosylation sites follow: Asn154, Asn170, and Asn176. Residues 212–737 form a disordered region; the sequence is LDSSTNSGHS…GSTETTLLPD (526 aa). Repeat 1 spans residues 222 to 240; it reads EESTVSHSGPGATGTTLFP. The segment at 222-4761 is 28 X 19 AA approximate tandem repeats of E-E-S-X-X-X-H-X-X-P-X-X-T-X-T-X-X-X-P; it reads EESTVSHSGP…PGSTQTMHFP (4540 aa). Polar residues-rich tracts occupy residues 226–246, 255–288, 296–313, and 325–342; these read VSHS…SATS, SPIT…SSPR, PART…TSHS, and DSTT…SHSI. Low complexity predominate over residues 343–366; it reads PGSTDTTLSPGTTTPSSLGPESTT. A compositionally biased stretch (polar residues) spans 367-387; sequence FHSSPGYTKTTRLPDNTTTSG. A glycan (N-linked (GlcNAc...) asparagine) is linked at Asn382. Residues 396–413 are compositionally biased toward low complexity; sequence HSSTGSPHTTLSPSSSTT. Polar residues predominate over residues 419–440; that stretch reads TTFQSWPSSKDTSPAPSGTTSA. Composition is skewed to low complexity over residues 445-466 and 478-495; these read STTY…SSTT and SSPV…SATS. 2 tandem repeats follow at residues 471–489 and 499–517. Over residues 531 to 554 the composition is skewed to low complexity; it reads TFHGSTTHTKSSTPSTTAALAHTS. 2 stretches are compositionally biased toward polar residues: residues 555–575 and 608–648; these read YHSS…TISG and STPS…SPDT. Positions 654–669 are enriched in low complexity; sequence SMTSSGVSEESTTSHS. Copy 4 of the repeat occupies 662 to 680; it reads EESTTSHSRPGSTHTTAFP. 2 stretches are compositionally biased toward polar residues: residues 670-715 and 722-737; these read RPGS…TASS and TFHS…LLPD. The N-linked (GlcNAc...) asparagine glycan is linked to Asn738. Disordered regions lie at residues 749–4847, 4887–5034, 5048–5071, and 5093–5112; these read MPVH…HFTT, SSRS…THTV, STAF…TASD, and ASSS…TSPS. Polar residues-rich tracts occupy residues 751–783 and 792–842; these read VHSS…WPSS and TTTS…TQTM. Repeat 5 spans residues 827 to 845; it reads EESTTYHSSPGSTQTMHFP. Over residues 859–877 the composition is skewed to low complexity; the sequence is TSHSSTTHTISSAPSTTSA. 2 stretches are compositionally biased toward polar residues: residues 884 to 899 and 928 to 970; these read SYHS…HFPD and RSTT…TTFH. Over residues 971–1007 the composition is skewed to low complexity; that stretch reads SSPRSPATTLSPASTTSSGVSEESTTSRSRPGSTHTT. The segment covering 1009 to 1021 has biased composition (polar residues); the sequence is FPDSTTTPGLSRH. Positions 1022–1065 are enriched in low complexity; sequence STTSHSSPGSTDTTLLPASTTTSGPSQESTTSHSSSGSTDTALS. 2 stretches are compositionally biased toward polar residues: residues 1066 to 1101 and 1108 to 1138; these read PGST…TSSG and RVHS…TAFQ. Residues 1139–1157 show a composition bias toward low complexity; the sequence is THPASTHTTPSPPSTATAP. Repeat unit 6 spans residues 1159–1177; sequence EESTTYHRSPGSTPTTHFP. Composition is skewed to polar residues over residues 1160-1184 and 1191-1207; these read ESTT…TTSG and IFHS…SSAH. Composition is skewed to low complexity over residues 1208–1220, 1229–1241, and 1249–1262; these read STTS…TTSR, TTLP…PGLS, and SSPR…SPAS. 3 stretches are compositionally biased toward polar residues: residues 1271 to 1324, 1331 to 1357, and 1364 to 1377; these read ESTT…TTSV, TFHS…TEES, and PAST…TLTT. Composition is skewed to low complexity over residues 1384 to 1396 and 1411 to 1438; these read STTF…STGT and ESTP…SLSE. The segment covering 1439 to 1448 has biased composition (polar residues); it reads KSTTFYTSPR. The segment covering 1458–1481 has biased composition (low complexity); that stretch reads TTTSSGVSEESSTSHSQPGSTHTT. Repeat unit 7 spans residues 1466–1484; it reads EESSTSHSQPGSTHTTAFP. Residues 1483–1537 show a composition bias toward polar residues; sequence FPDSTTTSDLSQEPTTSHSSQGSTEATLSPGSTTASSLGQQSTTFHSSPGDTETT. Low complexity predominate over residues 1552 to 1568; that stretch reads STPTHSSTGSLHTTLTP. Composition is skewed to polar residues over residues 1569-1586 and 1606-1630; these read ASST…FQSW and VSTT…TTLG. The stretch at 1633–1651 is repeat 8; that stretch reads EESTTVHSSPGATGTALFP. Residues 1653–1708 are compositionally biased toward polar residues; the sequence is RSATSVLVGEPTTSPISSGSTETTALPGSTTTAGLSEKSTTFYSSPRSPDTTLSPA. The span at 1709-1724 shows a compositional bias: low complexity; that stretch reads STTSSGVSEESTTSHS. Repeat 9 spans residues 1717 to 1735; it reads EESTTSHSRPGSTHTTAFP. Composition is skewed to polar residues over residues 1725–1797 and 1805–1840; these read RPGS…TTAS and PVHS…SSKD. An N-linked (GlcNAc...) asparagine glycan is attached at Asn1793. 2 stretches are compositionally biased toward low complexity: residues 1856–1877 and 1889–1906; these read STTS…SSTT and SSPV…STTS. Tandem repeats lie at residues 1882-1900 and 1910-1928. Polar residues predominate over residues 1914-1935; the sequence is AYHSSPGSTQTMHFPESSTASG. Low complexity predominate over residues 1943–1959; that stretch reads SHSSTTHTISSPPSTTS. Composition is skewed to polar residues over residues 1967-1982 and 2011-2053; these read SYHS…HFPD and RSTT…TTFH. Positions 2054-2082 are enriched in low complexity; it reads SSPRSPATTLSPASTTSSGVSEESTTSHS. Repeat unit 12 spans residues 2075–2093; sequence EESTTSHSRPGSTHTTAFP. The segment covering 2083-2104 has biased composition (polar residues); the sequence is RPGSTHTTAFPDSTTTPGLSRH. Positions 2105 to 2130 are enriched in low complexity; that stretch reads STTSHSSPGSTDTTLLPASTTTSGPS. Composition is skewed to polar residues over residues 2131–2184 and 2191–2221; these read QEST…TSSG and RVHS…TAFQ. Positions 2222–2240 are enriched in low complexity; sequence THPASTHTTPSPPSTATAP. Residues 2242–2260 form repeat 13; that stretch reads EESTTYHRSPGSTPTTHFP. 2 stretches are compositionally biased toward polar residues: residues 2243 to 2267 and 2274 to 2290; these read ESTT…TTSG and IFHS…SSAH. 3 stretches are compositionally biased toward low complexity: residues 2291–2303, 2312–2324, and 2332–2345; these read STTS…TTSR, TTLP…PGLS, and SSPR…SPAS. Over residues 2354–2392 the composition is skewed to polar residues; the sequence is ESTTSRSQPGSTHSTVSPASTTTPGLSEESTTVYSSSPG. A compositionally biased stretch (low complexity) spans 2393 to 2407; sequence STETTVFPRTPTTSV. Polar residues-rich tracts occupy residues 2414–2440 and 2447–2460; these read TFHS…TEES and PAST…TLTT. 2 stretches are compositionally biased toward low complexity: residues 2467-2483 and 2494-2521; these read STTF…TLSP and ESTP…SLSE. Polar residues predominate over residues 2522-2531; it reads KSTTFYTSPR. Low complexity predominate over residues 2541–2564; it reads TTTSSGVSEESSTSHSQPGSTHTT. Copy 14 of the repeat occupies 2549 to 2567; sequence EESSTSHSQPGSTHTTAFP. The span at 2566–2578 shows a compositional bias: polar residues; that stretch reads FPDSTTTPGLSRH. Positions 2579–2604 are enriched in low complexity; that stretch reads STTSHSSPGSTDTTLLPASTTTSGPS. Polar residues-rich tracts occupy residues 2605–2658 and 2665–2695; these read QEST…TSSG and RVHS…TTFQ. Residues 2696-2714 are compositionally biased toward low complexity; that stretch reads THPASTHTTPSPPSTATAP. Residues 2716–2734 form repeat 15; the sequence is EESTTYHRSPGSTPTTHFP. Polar residues-rich tracts occupy residues 2717–2741 and 2748–2764; these read ESTT…TTSG and IFHS…SSAH. Low complexity-rich tracts occupy residues 2765–2777, 2786–2798, and 2806–2819; these read STTS…TTSR, TTLP…PGLS, and SSPR…SPAS. Polar residues-rich tracts occupy residues 2828 to 2881, 2888 to 2914, and 2921 to 2934; these read ESTT…TTSV, TFHS…TEES, and PAST…TLTT. Composition is skewed to low complexity over residues 2941 to 2957 and 2968 to 2995; these read STTF…TLSP and ESTP…SLSE. The segment covering 2996–3005 has biased composition (polar residues); that stretch reads KSTTFYTSPR. A compositionally biased stretch (low complexity) spans 3015-3038; sequence TTTSSGVSEESSTSHSQPGSTHTT. The stretch at 3023–3041 is repeat 16; the sequence is EESSTSHSQPGSTHTTAFP. The span at 3040-3094 shows a compositional bias: polar residues; sequence FPDSTTTSGLSQEPTASHSSQGSTEATLSPGSTTASSLGQQSTTFHSSPGDTETT. The span at 3109 to 3125 shows a compositional bias: low complexity; the sequence is STPTHSSTGSLHTTLTP. Composition is skewed to polar residues over residues 3126 to 3143 and 3163 to 3187; these read ASST…FQSW and VSTT…TTLG. Repeat unit 17 spans residues 3190–3208; it reads EESTTVHSSPGATGTALFP. Over residues 3210-3265 the composition is skewed to polar residues; it reads RSATSVLVGEPTTSPISSGSTETTALPGSTTTAGLSEKSTTFYSSPRSPDTTLSPA. Positions 3266-3281 are enriched in low complexity; that stretch reads STTSSGVSEESTTSHS. Copy 18 of the repeat occupies 3274–3292; it reads EESTTSHSRPGSTHTTAFP. Polar residues-rich tracts occupy residues 3282-3354 and 3362-3397; these read RPGS…TTAS and PVHS…NSKD. The N-linked (GlcNAc...) asparagine glycan is linked to Asn3350. Composition is skewed to low complexity over residues 3413–3434 and 3446–3463; these read STTS…SSTT and SSPV…STTS. 2 repeat units span residues 3439-3457 and 3467-3485. The segment covering 3468–3482 has biased composition (polar residues); the sequence is ESTTYHSSPGSTQTM. The span at 3499–3517 shows a compositional bias: low complexity; sequence TSHSSTTHTISSAPSTTSA. 2 stretches are compositionally biased toward polar residues: residues 3524–3539 and 3568–3610; these read SYHS…HFPD and RSTT…TTFH. Positions 3611-3639 are enriched in low complexity; it reads SSPRSPATTLSPASTTSSGVSEESTTSHS. Copy 21 of the repeat occupies 3632-3650; it reads EESTTSHSRPGSTHTTAFP. Over residues 3640-3661 the composition is skewed to polar residues; it reads RPGSTHTTAFPDSTTTPGLSRH. Low complexity predominate over residues 3662-3705; sequence STTSHSSPGSTDTTLLPASTTTSGSSQESTTSHSSSGSTDTALS. Composition is skewed to polar residues over residues 3706-3741 and 3748-3778; these read PGST…TSSG and RVHS…TAFQ. Positions 3779 to 3797 are enriched in low complexity; the sequence is THPASTHTTPSPPSTATAP. Repeat unit 22 spans residues 3799 to 3817; the sequence is EESTTYHRSPGSTPTTHFP. Polar residues-rich tracts occupy residues 3800–3824 and 3831–3847; these read ESTT…TTSG and IFHS…SSAH. Low complexity-rich tracts occupy residues 3848–3860, 3869–3881, and 3889–3902; these read STTS…TTSR, TTLP…PGLS, and SSPR…SPAS. Composition is skewed to polar residues over residues 3911 to 3963, 3971 to 3997, and 4004 to 4017; these read ESTT…TTTS, TFHS…TEES, and PAST…TLTT. Composition is skewed to low complexity over residues 4024 to 4036 and 4051 to 4078; these read STTF…STGT and ESTP…SLSE. A compositionally biased stretch (polar residues) spans 4079–4088; the sequence is KSTTFYTSPR. Residues 4098–4121 show a composition bias toward low complexity; sequence TTTSSGVSEESSTSHSQPGSTHTT. Repeat 23 spans residues 4106 to 4124; sequence EESSTSHSQPGSTHTTAFP. Over residues 4123-4177 the composition is skewed to polar residues; that stretch reads FPDSTTTSGLSQEPTTSHSSQGSTEATLSPGSTTASSLGQQSTTFHSSPGDTETT. The span at 4192 to 4208 shows a compositional bias: low complexity; the sequence is STPTHSSTGSLHTTLTP. Polar residues predominate over residues 4209–4226; it reads ASSTSTGLQEESTTFQSW. Low complexity predominate over residues 4227-4249; it reads PSSSDTTPSPPSTTAVPVEVSTT. Positions 4250–4270 are enriched in polar residues; it reads YHSRPSSTPTTHFSASSTTLG. Copy 24 of the repeat occupies 4273–4291; that stretch reads EESTTVHSSPGATGTALFP. Residues 4293–4348 are compositionally biased toward polar residues; it reads RSATSVLVGEPTTSPISSGSTETTALPGSTTTAGLSEKSTTFYSSPRSPDTTLSPA. Over residues 4349–4364 the composition is skewed to low complexity; that stretch reads STTSSGVSEESTTSHS. 2 stretches are compositionally biased toward polar residues: residues 4369–4437 and 4445–4480; these read MHTT…TTAS and PVHS…NSKD. Residue Asn4433 is glycosylated (N-linked (GlcNAc...) asparagine). Low complexity-rich tracts occupy residues 4496 to 4517 and 4529 to 4546; these read STTS…SSTT and SSPV…STTS. Repeat copies occupy residues 4522–4540 and 4550–4568. The segment covering 4551 to 4571 has biased composition (polar residues); sequence ESTTYHSSPGSTQTMHFPESN. Asn4571 carries an N-linked (GlcNAc...) asparagine glycan. Positions 4582 to 4600 are enriched in low complexity; that stretch reads TSHSSTTHTISSAPSTTSA. Polar residues-rich tracts occupy residues 4607–4622 and 4651–4688; these read SYHS…HFPD and RSTT…LSEK. Composition is skewed to low complexity over residues 4689–4710 and 4722–4739; these read STTF…SSTT and SSPV…STTS. 2 repeat units span residues 4715–4733 and 4743–4761. Residues 4747–4768 are compositionally biased toward polar residues; it reads AYHSSPGSTQTMHFPESSTASG. Low complexity predominate over residues 4776–4792; it reads SHSSTTHTISSPPSTTS. 2 stretches are compositionally biased toward polar residues: residues 4800 to 4814 and 4887 to 4917; these read SYHS…THFP and SSRS…SQAE. A compositionally biased stretch (low complexity) spans 4918–4931; sequence STHTTAFPASTTTS. Polar residues-rich tracts occupy residues 4932 to 5024 and 5048 to 5061; these read GLSQ…STPF and STAF…TGTT. Over residues 5094–5112 the composition is skewed to low complexity; it reads SSSTSGLTEESTTFHTSPS. One can recognise an EGF-like domain in the interval 5116–5154; sequence TIVSTESLETLAPGLCQEGQIWNGKQCVCPQGYVGYQCL. Cys5144 and Cys5153 are joined by a disulfide. In terms of domain architecture, SEA spans 5168-5275; it reads LNATLGMTVK…TRTTLLDPDS (108 aa). 5 N-linked (GlcNAc...) asparagine glycosylation sites follow: Asn5169, Asn5182, Asn5197, Asn5228, and Asn5264. Positions 5226-5233 match the Cleavage motif motif; the sequence is LLNGSIVV. A helical transmembrane segment spans residues 5381–5401; sequence GIVGAVMAVLLLALIILIILF. Residues 5402–5478 lie on the Cytoplasmic side of the membrane; the sequence is SLSQRKRHRE…QRPEMVASTV (77 aa).

Ubiquitous, with higher expression in colon. Down-regulated in colorectal cancer as well as in the colon of patients with ulcerative colitis (UC) and Crohn's disease (CD).

The protein localises to the membrane. Functionally, involved in epithelial cell protection, adhesion modulation, and signaling. May be involved in epithelial cell growth regulation. Stimulated by both cytokine TNF-alpha and TGF-beta in intestinal epithelium. This is Mucin-12 (MUC12) from Homo sapiens (Human).